Reading from the N-terminus, the 97-residue chain is Protein C4 (97 aa).

Disordered regions lie at residues 1-31 (MGLL…PHTG) and 75-97 (ANLP…PSIY). A lipid anchor (N-myristoyl glycine; by host) is attached at Gly2. Polar residues predominate over residues 77 to 88 (LPTTHMPRQSIQ).

The protein belongs to the geminiviridae protein AC4/C4 family.

It is found in the host cell membrane. Pathogenicity determinant. May act as a suppressor of RNA-mediated gene silencing, also known as post-transcriptional gene silencing (PTGS), a mechanism of plant viral defense that limits the accumulation of viral RNAs. The polypeptide is Protein C4 (Tomato yellow leaf curl China virus (TYLCCNV)).